A 396-amino-acid polypeptide reads, in one-letter code: Ribosomal RNA large subunit methyltransferase I (396 aa).

The PUA domain maps to 2-79; that stretch reads AVRIKLKPGR…REEEIDREFF (78 aa).

The protein belongs to the methyltransferase superfamily. RlmI family.

The protein localises to the cytoplasm. The enzyme catalyses cytidine(1962) in 23S rRNA + S-adenosyl-L-methionine = 5-methylcytidine(1962) in 23S rRNA + S-adenosyl-L-homocysteine + H(+). Its function is as follows. Specifically methylates the cytosine at position 1962 (m5C1962) of 23S rRNA. The chain is Ribosomal RNA large subunit methyltransferase I from Shewanella sp. (strain MR-7).